Here is a 431-residue protein sequence, read N- to C-terminus: Adenylosuccinate synthetase (431 aa).

GTP is bound by residues 13–19 (GDEGKGK) and 41–43 (GHT). The Proton acceptor role is filled by aspartate 14. The Mg(2+) site is built by aspartate 14 and glycine 41. Residues 14–17 (DEGK), 39–42 (NAGH), threonine 130, arginine 144, glutamine 225, threonine 240, and arginine 304 each bind IMP. The active-site Proton donor is histidine 42. 300-306 (ATTGRKR) contacts substrate. GTP is bound by residues arginine 306, 332-334 (KLD), and 415-417 (STG).

It belongs to the adenylosuccinate synthetase family. Homodimer. The cofactor is Mg(2+).

The protein localises to the cytoplasm. The enzyme catalyses IMP + L-aspartate + GTP = N(6)-(1,2-dicarboxyethyl)-AMP + GDP + phosphate + 2 H(+). The protein operates within purine metabolism; AMP biosynthesis via de novo pathway; AMP from IMP: step 1/2. Plays an important role in the de novo pathway of purine nucleotide biosynthesis. Catalyzes the first committed step in the biosynthesis of AMP from IMP. The chain is Adenylosuccinate synthetase from Shewanella denitrificans (strain OS217 / ATCC BAA-1090 / DSM 15013).